The primary structure comprises 133 residues: Large-conductance mechanosensitive channel (133 aa).

2 helical membrane passes run 14 to 34 and 67 to 87; these read VIDL…VSSL and GNFI…FMFV.

It belongs to the MscL family. As to quaternary structure, homopentamer.

It is found in the cell membrane. Functionally, channel that opens in response to stretch forces in the membrane lipid bilayer. May participate in the regulation of osmotic pressure changes within the cell. This Bacillus mycoides (strain KBAB4) (Bacillus weihenstephanensis) protein is Large-conductance mechanosensitive channel.